Reading from the N-terminus, the 894-residue chain is Translation initiation factor IF-2 (894 aa).

The tract at residues 47–305 (AHLNRENGSG…GSALQQSFQK (259 aa)) is disordered. The span at 68–82 (STLNIPGTGGKSKSV) shows a compositional bias: polar residues. Composition is skewed to basic and acidic residues over residues 93–159 (VKRD…KDKV) and 166–219 (DMTK…KWTD). A compositionally biased stretch (basic residues) spans 254 to 269 (GRSRNAKAARPAKKGN). Over residues 270–283 (KHSESKADREEARA) the composition is skewed to basic and acidic residues. Residues 393–562 (PRAPVVTIMG…LLQAEVLELK (170 aa)) enclose the tr-type G domain. Positions 402-409 (GHVDHGKT) are G1. Residue 402 to 409 (GHVDHGKT) participates in GTP binding. A G2 region spans residues 427–431 (GITQH). A G3 region spans residues 448–451 (DTPG). GTP is bound by residues 448–452 (DTPGH) and 502–505 (NKID). Positions 502 to 505 (NKID) are G4. The segment at 538-540 (SAK) is G5.

This sequence belongs to the TRAFAC class translation factor GTPase superfamily. Classic translation factor GTPase family. IF-2 subfamily.

The protein resides in the cytoplasm. One of the essential components for the initiation of protein synthesis. Protects formylmethionyl-tRNA from spontaneous hydrolysis and promotes its binding to the 30S ribosomal subunits. Also involved in the hydrolysis of GTP during the formation of the 70S ribosomal complex. The sequence is that of Translation initiation factor IF-2 from Citrobacter koseri (strain ATCC BAA-895 / CDC 4225-83 / SGSC4696).